Here is a 152-residue protein sequence, read N- to C-terminus: Large ribosomal subunit protein uL24 (152 aa).

Residues 128 to 152 (VVEEKETSKTSEGGGKTIEETEGEK) form a disordered region.

This sequence belongs to the universal ribosomal protein uL24 family. In terms of assembly, part of the 50S ribosomal subunit.

In terms of biological role, one of two assembly initiator proteins, it binds directly to the 5'-end of the 23S rRNA, where it nucleates assembly of the 50S subunit. Its function is as follows. Located at the polypeptide exit tunnel on the outside of the subunit. The protein is Large ribosomal subunit protein uL24 of Staphylothermus marinus (strain ATCC 43588 / DSM 3639 / JCM 9404 / F1).